The following is a 239-amino-acid chain: Bidirectional sugar transporter SWEET8 (239 aa).

Topologically, residues 1-6 are extracellular; it reads MVDAKQ. The chain crosses the membrane as a helical span at residues 7 to 27; sequence VRFIIGVIGNVISFGLFAAPA. A MtN3/slv 1 domain is found at 9-98; sequence FIIGVIGNVI…VYLMYCGHKK (90 aa). Topologically, residues 28–44 are cytoplasmic; it reads KTFWRIFKKKSVEEFSY. A helical transmembrane segment spans residues 45 to 65; that stretch reads VPYVATVMNCMLWVFYGLPVV. Topologically, residues 66 to 69 are extracellular; it reads HKDS. A helical membrane pass occupies residues 70-90; that stretch reads ILVSTINGVGLVIELFYVGVY. Residues 91 to 103 lie on the Cytoplasmic side of the membrane; it reads LMYCGHKKNHRRN. A helical membrane pass occupies residues 104–124; it reads ILGFLALEVILVVAIILITLF. Residues 125 to 135 lie on the Extracellular side of the membrane; it reads ALKGDFVKQTF. Residues 134 to 185 form the MtN3/slv 2 domain; that stretch reads TFVGVICDVFNIAMYGAPSLAIIKVVKTKSVEYMPFLLSLVCFVNAGIWTTY. The helical transmembrane segment at 136–156 threads the bilayer; that stretch reads VGVICDVFNIAMYGAPSLAII. The Cytoplasmic portion of the chain corresponds to 157 to 168; it reads KVVKTKSVEYMP. The helical transmembrane segment at 169 to 189 threads the bilayer; that stretch reads FLLSLVCFVNAGIWTTYSLIF. Residues 190–194 are Extracellular-facing; sequence KIDYY. A helical transmembrane segment spans residues 195–215; the sequence is VLASNGIGTFLALSQLIVYFM. Residues 216–239 are Cytoplasmic-facing; it reads YYKSTPKEKTVKPSEVEISATERV.

Belongs to the SWEET sugar transporter family. As to quaternary structure, forms homooligomers and heterooligomers with SWEET4, SWEET5, SWEET6, SWEET7, SWEET9, SWEET10, SWEET11, SWEET13, SWEET15, SWEET16 and SWEET17. In terms of tissue distribution, expressed in inflorescences, embryo sacs and pollen, and at a lower level in stems. Barely detected in roots, leaves and seedlings.

It localises to the cell membrane. Functionally, mediates both low-affinity uptake and efflux of sugar across the plasma membrane. Required, in pollen, for microspore cell integrity and primexine pattern formation. This chain is Bidirectional sugar transporter SWEET8, found in Arabidopsis thaliana (Mouse-ear cress).